A 308-amino-acid polypeptide reads, in one-letter code: tRNA dimethylallyltransferase (308 aa).

10–17 (GPTGVGKT) lines the ATP pocket. Residue 12-17 (TGVGKT) coordinates substrate. Residues 35–38 (DSRQ) form an interaction with substrate tRNA region.

This sequence belongs to the IPP transferase family. Monomer. Mg(2+) serves as cofactor.

The enzyme catalyses adenosine(37) in tRNA + dimethylallyl diphosphate = N(6)-dimethylallyladenosine(37) in tRNA + diphosphate. Catalyzes the transfer of a dimethylallyl group onto the adenine at position 37 in tRNAs that read codons beginning with uridine, leading to the formation of N6-(dimethylallyl)adenosine (i(6)A). This chain is tRNA dimethylallyltransferase, found in Fervidobacterium nodosum (strain ATCC 35602 / DSM 5306 / Rt17-B1).